A 103-amino-acid chain; its full sequence is Large ribosomal subunit protein bL21 (103 aa).

The protein belongs to the bacterial ribosomal protein bL21 family. As to quaternary structure, part of the 50S ribosomal subunit. Contacts protein L20.

Its function is as follows. This protein binds to 23S rRNA in the presence of protein L20. This is Large ribosomal subunit protein bL21 from Variovorax paradoxus (strain S110).